The primary structure comprises 317 residues: Heme-binding protein HMX1 (317 aa).

Over M1–A289 the chain is Cytoplasmic. A helical; Anchor for type IV membrane protein transmembrane segment spans residues L290–V310.

Heme is required as a cofactor.

Its subcellular location is the endoplasmic reticulum membrane. Functionally, plays an important role in the degradation of heme under conditions of iron deprivation. The sequence is that of Heme-binding protein HMX1 (HMX1) from Saccharomyces cerevisiae (strain ATCC 204508 / S288c) (Baker's yeast).